The primary structure comprises 261 residues: Cytochrome c oxidase subunit 3 (261 aa).

Residues 1–15 (MAHQAHSYHMVDPSP) are Mitochondrial matrix-facing. Residues 16–34 (WPIFGAAAALLTTSGLIMW) traverse the membrane as a helical segment. Residues 35 to 40 (FHYSST) are Mitochondrial intermembrane-facing. Residues 41-66 (TLLTMGLLSMLLVMLQWWRDVVREST) form a helical membrane-spanning segment. Topologically, residues 67–72 (FQGHHT) are mitochondrial matrix. The helical transmembrane segment at 73 to 105 (PTVQKGLRYGMILFITSEAFFFLGFFWAFFHSS) threads the bilayer. The Mitochondrial intermembrane segment spans residues 106–128 (LAPTPELGGQWPPTGVKPLNPLE). Residues 129-152 (VPLLNTAILLASGVTVTWAHHSIT) form a helical membrane-spanning segment. Topologically, residues 153–155 (EGN) are mitochondrial matrix. Residues 156-183 (RKQAIHALTLTILLGFYFTALQAMEYHE) form a helical membrane-spanning segment. Residues 184 to 190 (ASFSIAD) are Mitochondrial intermembrane-facing. The chain crosses the membrane as a helical span at residues 191–223 (SVYGSTFFVATGFHGLHVIIGSSFLTVCLLRLI). Residues 224–232 (KFHFTPNHH) lie on the Mitochondrial matrix side of the membrane. A helical membrane pass occupies residues 233–256 (FGFEAAAWYWHFVDIIWLFLYMSM). Over 257-261 (YWWGS) the chain is Mitochondrial intermembrane.

The protein belongs to the cytochrome c oxidase subunit 3 family. As to quaternary structure, component of the cytochrome c oxidase (complex IV, CIV), a multisubunit enzyme composed of 14 subunits. The complex is composed of a catalytic core of 3 subunits MT-CO1, MT-CO2 and MT-CO3, encoded in the mitochondrial DNA, and 11 supernumerary subunits COX4I, COX5A, COX5B, COX6A, COX6B, COX6C, COX7A, COX7B, COX7C, COX8 and NDUFA4, which are encoded in the nuclear genome. The complex exists as a monomer or a dimer and forms supercomplexes (SCs) in the inner mitochondrial membrane with NADH-ubiquinone oxidoreductase (complex I, CI) and ubiquinol-cytochrome c oxidoreductase (cytochrome b-c1 complex, complex III, CIII), resulting in different assemblies (supercomplex SCI(1)III(2)IV(1) and megacomplex MCI(2)III(2)IV(2)).

The protein resides in the mitochondrion inner membrane. It carries out the reaction 4 Fe(II)-[cytochrome c] + O2 + 8 H(+)(in) = 4 Fe(III)-[cytochrome c] + 2 H2O + 4 H(+)(out). Its function is as follows. Component of the cytochrome c oxidase, the last enzyme in the mitochondrial electron transport chain which drives oxidative phosphorylation. The respiratory chain contains 3 multisubunit complexes succinate dehydrogenase (complex II, CII), ubiquinol-cytochrome c oxidoreductase (cytochrome b-c1 complex, complex III, CIII) and cytochrome c oxidase (complex IV, CIV), that cooperate to transfer electrons derived from NADH and succinate to molecular oxygen, creating an electrochemical gradient over the inner membrane that drives transmembrane transport and the ATP synthase. Cytochrome c oxidase is the component of the respiratory chain that catalyzes the reduction of oxygen to water. Electrons originating from reduced cytochrome c in the intermembrane space (IMS) are transferred via the dinuclear copper A center (CU(A)) of subunit 2 and heme A of subunit 1 to the active site in subunit 1, a binuclear center (BNC) formed by heme A3 and copper B (CU(B)). The BNC reduces molecular oxygen to 2 water molecules using 4 electrons from cytochrome c in the IMS and 4 protons from the mitochondrial matrix. The sequence is that of Cytochrome c oxidase subunit 3 (MT-CO3) from Gallus gallus (Chicken).